A 254-amino-acid chain; its full sequence is Adenosine 5'-phosphosulfate reductase (254 aa).

Residues Cys-140, Cys-141, Cys-223, and Cys-226 each contribute to the [4Fe-4S] cluster site. Cys-249 acts as the Nucleophile; cysteine thiosulfonate intermediate in catalysis.

It belongs to the PAPS reductase family. CysH subfamily. [4Fe-4S] cluster serves as cofactor.

Its subcellular location is the cytoplasm. The enzyme catalyses [thioredoxin]-disulfide + sulfite + AMP + 2 H(+) = adenosine 5'-phosphosulfate + [thioredoxin]-dithiol. The protein operates within sulfur metabolism; hydrogen sulfide biosynthesis; sulfite from sulfate. Functionally, catalyzes the formation of sulfite from adenosine 5'-phosphosulfate (APS) using thioredoxin as an electron donor. In Mycobacterium bovis (strain ATCC BAA-935 / AF2122/97), this protein is Adenosine 5'-phosphosulfate reductase.